The following is a 509-amino-acid chain: MYIIFSSIFAGFILGFLIRVFLGRLSLLDLEKNLTKVRVESQLEIENERRQIIANAKSQMLKEKNQQDRDIRDRKNEIVNLEKRLLQREETLDKRISALDKQQSRVDFKIKEFEQKEKVIREKEADLVKRLENISGLTREDARKIVIEKVEHESRRDAQVIINKSEQEAQLLADKVAKDILVSTMQRIVTEVSSEFTVASVELPNDEMKGRIIGKEGRNIRALETLIGADIIIDDTPEAVVISCFDPIRKELAKRTLERLVTDGRIHPARIEEVVYNVTNEINSIIQEEGEKVVFDLNIHGLDKRLIRGLGRLYFRSSYGQNVLSHSKETAIIGEILAKEMKLDPIVVKRACLLHDIGKGMESISDNSEGHAITGAELAQSCGESEIVVNAIAAHHNEVKPESLEAIVVQIADAISASRPGARRESLNNYINRLKRLEDIAYSFEGVQKCYAIQAGREVRIIVDNALINDEKSILLARDIAKKIEAEMRYPGKIKVTIIRETRVIEYAR.

The chain crosses the membrane as a helical span at residues 3-23 (IIFSSIFAGFILGFLIRVFLG). The region spanning 197–257 (TVASVELPND…IRKELAKRTL (61 aa)) is the KH domain. One can recognise an HD domain in the interval 323–418 (VLSHSKETAI…VQIADAISAS (96 aa)).

This sequence belongs to the RNase Y family.

The protein resides in the cell membrane. Its function is as follows. Endoribonuclease that initiates mRNA decay. In Borreliella afzelii (strain PKo) (Borrelia afzelii), this protein is Ribonuclease Y.